A 120-amino-acid polypeptide reads, in one-letter code: Spermidine export protein MdtJ (120 aa).

The next 4 membrane-spanning stretches (helical) occupy residues 1 to 21, 31 to 51, 54 to 74, and 81 to 101; these read MFYWILLALAIIAEITGTLSM, TGFILMLAMIALSYIFLAFAV, IALGVAYALWEGIGILLITLF, and ESLSLLKIAGLTTLVIGIVLI.

This sequence belongs to the drug/metabolite transporter (DMT) superfamily. Small multidrug resistance (SMR) (TC 2.A.7.1) family. MdtJ subfamily. As to quaternary structure, forms a complex with MdtI.

Its subcellular location is the cell inner membrane. Functionally, catalyzes the excretion of spermidine. This is Spermidine export protein MdtJ from Klebsiella pneumoniae subsp. pneumoniae (strain ATCC 700721 / MGH 78578).